Reading from the N-terminus, the 821-residue chain is Bifunctional dethiobiotin synthetase/7,8-diamino-pelargonic acid aminotransferase, mitochondrial (821 aa).

Positions 28 to 283 are dethiobiotin synthetase; sequence SPAFAVFGAN…VHVLPPIPED (256 aa). 39–44 contacts ATP; the sequence is GVGKTL. Threonine 43 provides a ligand contact to Mg(2+). Residue threonine 72 participates in substrate binding. Glutamate 194 is a binding site for Mg(2+). 194-197 contacts ATP; it reads ETAG. The tract at residues 316-820 is 7,8-diamino-pelargonic acid aminotransferase; the sequence is RLNSMQRKSK…AKVHRRLQKL (505 aa). 374–375 contacts (8S)-8-amino-7-oxononanoate; it reads WW. 436–437 serves as a coordination point for pyridoxal 5'-phosphate; that stretch reads GS. (8S)-8-amino-7-oxononanoate is bound at residue tyrosine 482. Position 626 (aspartate 626) interacts with pyridoxal 5'-phosphate. (8S)-8-amino-7-oxononanoate contacts are provided by lysine 655 and glycine 689. N6-(pyridoxal phosphate)lysine is present on lysine 655. Position 691 (serine 691) interacts with pyridoxal 5'-phosphate. (8S)-8-amino-7-oxononanoate is bound at residue arginine 787.

This sequence in the N-terminal section; belongs to the dethiobiotin synthetase family. The protein in the C-terminal section; belongs to the class-III pyridoxal-phosphate-dependent aminotransferase family. BioA subfamily. Requires Mg(2+) as cofactor. Pyridoxal 5'-phosphate serves as cofactor.

The protein localises to the mitochondrion. It carries out the reaction (7R,8S)-7,8-diammoniononanoate + CO2 + ATP = (4R,5S)-dethiobiotin + ADP + phosphate + 3 H(+). It catalyses the reaction (8S)-8-amino-7-oxononanoate + S-adenosyl-L-methionine = S-adenosyl-4-methylsulfanyl-2-oxobutanoate + (7R,8S)-7,8-diammoniononanoate. Its pathway is cofactor biosynthesis; biotin biosynthesis; biotin from 7,8-diaminononanoate: step 1/2. The protein operates within cofactor biosynthesis; biotin biosynthesis; 7,8-diaminononanoate from 8-amino-7-oxononanoate (SAM route): step 1/1. Functionally, bifunctional enzyme that catalyzes two different reactions involved in the biotin biosynthesis. In terms of biological role, catalyzes a mechanistically unusual reaction, the ATP-dependent insertion of CO2 between the N7 and N8 nitrogen atoms of 7,8-diaminopelargonic acid (DAPA) to form an ureido ring. Catalyzes the transfer of the alpha-amino group from S-adenosyl-L-methionine (SAM) to 7-keto-8-aminopelargonic acid (KAPA) to form 7,8-diaminopelargonic acid (DAPA). It is the only aminotransferase known to utilize SAM as an amino donor. This is Bifunctional dethiobiotin synthetase/7,8-diamino-pelargonic acid aminotransferase, mitochondrial (BIO3-BIO1) from Oryza sativa subsp. japonica (Rice).